Reading from the N-terminus, the 522-residue chain is Pectinesterase/pectinesterase inhibitor PPE8B (522 aa).

Residues 1–30 (MPYLLMASHNPLPAGKQLLLLVLLCAFFSS) form the signal peptide. Positions 31 to 174 (SFIPFASCSI…TSLVQELLTQ (144 aa)) are pectinesterase inhibitor PPE8B. N-linked (GlcNAc...) asparagine glycans are attached at residues Asn105, Asn118, Asn119, Asn218, Asn221, and Asn274. The tract at residues 208-506 (DAIVAQDGTG…YTVAQFIEGN (299 aa)) is pectinesterase PPE8B. The substrate site is built by Thr283 and Gln313. Asp336 serves as the catalytic Proton donor; for pectinesterase activity. Cys350 and Cys370 are disulfide-bonded. Asp357 acts as the Nucleophile; for pectinesterase activity in catalysis. A glycan (N-linked (GlcNAc...) asparagine) is linked at Asn405. Substrate-binding residues include Arg426 and Trp428. N-linked (GlcNAc...) asparagine glycans are attached at residues Asn489 and Asn496.

The protein in the N-terminal section; belongs to the PMEI family. This sequence in the C-terminal section; belongs to the pectinesterase family.

Its subcellular location is the secreted. The protein localises to the cell wall. The catalysed reaction is [(1-&gt;4)-alpha-D-galacturonosyl methyl ester](n) + n H2O = [(1-&gt;4)-alpha-D-galacturonosyl](n) + n methanol + n H(+). The protein operates within glycan metabolism; pectin degradation; 2-dehydro-3-deoxy-D-gluconate from pectin: step 1/5. Its function is as follows. May have roles in the deposition of pectin in developing tissues and in the wall loosening and cell separation that occurs in cell expansion, fruit ripening and abscission. The protein is Pectinesterase/pectinesterase inhibitor PPE8B of Prunus persica (Peach).